A 932-amino-acid chain; its full sequence is Chitin synthase regulatory factor 3 (932 aa).

Basic and acidic residues predominate over residues 1-16 (MKDSHSSRRKYEKEKL). Disordered stretches follow at residues 1–53 (MKDS…PTSR), 264–356 (TLEE…LQQP), and 374–406 (EVPA…NPTV). Polar residues-rich tracts occupy residues 35–53 (SGNT…PTSR), 274–285 (DSITNTVSNASS), and 308–319 (SHFSSTDSNTDS). Basic and acidic residues predominate over residues 337-349 (KSSETLKNPRNDD). Position 393 is a phosphoserine (Ser393). Sel1-like repeat units follow at residues 638–674 (PEAL…KKGH), 675–710 (PLSN…EMDV), 711–747 (VEAM…KSKG), 751–788 (VRAM…VYGY), 789–825 (AAAQ…EQDY), 826–863 (GEAE…CKGL), and 864–899 (AKAQ…KQGF). Positions 905 to 932 (RLEEQALSSKQTHSKAPKKKQQEQCVVM) are disordered.

The protein is Chitin synthase regulatory factor 3 (chr3) of Schizosaccharomyces pombe (strain 972 / ATCC 24843) (Fission yeast).